Consider the following 577-residue polypeptide: Arginine--tRNA ligase (577 aa).

A 'HIGH' region motif is present at residues 124–132 (VAKEMHVGH).

Belongs to the class-I aminoacyl-tRNA synthetase family. As to quaternary structure, monomer.

The protein resides in the cytoplasm. It catalyses the reaction tRNA(Arg) + L-arginine + ATP = L-arginyl-tRNA(Arg) + AMP + diphosphate. This chain is Arginine--tRNA ligase, found in Salmonella typhi.